The following is a 150-amino-acid chain: Transcriptional repressor NrdR (150 aa).

Residues 3-34 (CPYCQFEDTRVIDSRLASEGEQVRRRRECNRC) fold into a zinc finger. One can recognise an ATP-cone domain in the interval 49-139 (PRIVKRDGTR…VYRSFEDVSA (91 aa)).

Belongs to the NrdR family. Zn(2+) is required as a cofactor.

In terms of biological role, negatively regulates transcription of bacterial ribonucleotide reductase nrd genes and operons by binding to NrdR-boxes. This chain is Transcriptional repressor NrdR, found in Alkalilimnicola ehrlichii (strain ATCC BAA-1101 / DSM 17681 / MLHE-1).